Here is a 244-residue protein sequence, read N- to C-terminus: Ribonuclease PH (244 aa).

Phosphate contacts are provided by residues Arg-90 and 128-130 (GTR).

It belongs to the RNase PH family. As to quaternary structure, homohexameric ring arranged as a trimer of dimers.

It carries out the reaction tRNA(n+1) + phosphate = tRNA(n) + a ribonucleoside 5'-diphosphate. Functionally, phosphorolytic 3'-5' exoribonuclease that plays an important role in tRNA 3'-end maturation. Removes nucleotide residues following the 3'-CCA terminus of tRNAs; can also add nucleotides to the ends of RNA molecules by using nucleoside diphosphates as substrates, but this may not be physiologically important. Probably plays a role in initiation of 16S rRNA degradation (leading to ribosome degradation) during starvation. The sequence is that of Ribonuclease PH from Prochlorococcus marinus (strain MIT 9313).